Reading from the N-terminus, the 133-residue chain is Small ribosomal subunit protein uS8 (133 aa).

This sequence belongs to the universal ribosomal protein uS8 family. Part of the 30S ribosomal subunit. Contacts proteins S5 and S12.

Functionally, one of the primary rRNA binding proteins, it binds directly to 16S rRNA central domain where it helps coordinate assembly of the platform of the 30S subunit. This chain is Small ribosomal subunit protein uS8, found in Gloeothece citriformis (strain PCC 7424) (Cyanothece sp. (strain PCC 7424)).